The primary structure comprises 196 residues: Corticoliberin (196 aa).

A signal peptide spans 1 to 24; it reads MRLPLLLSAGVLLVVSLPCPPCRA. A propeptide spanning residues 25–153 is cleaved from the precursor; that stretch reads LLSRGPIPGA…RQETPERERR (129 aa). The tract at residues 122–158 is disordered; sequence PRRQLDSPAGPAERGEENALGSRQETPERERRSEEPP. Residues 146–156 are compositionally biased toward basic and acidic residues; that stretch reads ETPERERRSEE. Ile194 is modified (isoleucine amide).

Belongs to the sauvagine/corticotropin-releasing factor/urotensin I family. Interacts (via C-terminus) with CRFR1 (via N-terminal extracellular domain). Produced by the hypothalamus.

Its subcellular location is the secreted. In terms of biological role, hormone regulating the release of corticotropin from pituitary gland. Induces NLRP6 in intestinal epithelial cells, hence may influence gut microbiota profile. In Canis lupus familiaris (Dog), this protein is Corticoliberin (CRH).